The chain runs to 356 residues: MFPSRLLEKWWLRAFIALVIFFVWQLFYAINRVQSLEEERATLQATIEVLTRKSDGLRTQIFEKERNLVRLNGKVEEIDTQIRDHLSLLPRVNRSTPFIYFITPTHFRAAQRADLTRLSYTLSHVPNLHWIVVEDSDELTPSIAGILKRSKIPNTHLNARTPSDQKMRYDDPNWTLPRGVEQRNRALLWIQNQLSGVKEGVVYFGDDDNTYDLKIFGEMRKVKNAGVWPVGIVGGMFVETPILEKNGSISHFNAVWKPERPFPIDMAAFAVNISLVLSNANALFSFDVPRGYQESTFLENLGIHRYNMEPLAEMCTKVYVWHTRTEKPKLSKESIDRLTKKTGFNSLEAHALGVDN.

Topologically, residues 1–9 are cytoplasmic; that stretch reads MFPSRLLEK. The helical; Signal-anchor for type II membrane protein transmembrane segment at 10 to 30 threads the bilayer; it reads WWLRAFIALVIFFVWQLFYAI. At 31 to 356 the chain is on the lumenal side; that stretch reads NRVQSLEEER…LEAHALGVDN (326 aa). N-linked (GlcNAc...) asparagine glycosylation is found at N93 and N173. A Mn(2+)-binding site is contributed by D208. 2 N-linked (GlcNAc...) asparagine glycosylation sites follow: N246 and N272. E294 functions as the Proton acceptor in the catalytic mechanism.

This sequence belongs to the glycosyltransferase 43 family.

It is found in the membrane. The enzyme catalyses 3-O-(beta-D-galactosyl-(1-&gt;3)-beta-D-galactosyl-(1-&gt;4)-beta-D-xylosyl)-L-seryl-[protein] + UDP-alpha-D-glucuronate = 3-O-(beta-D-GlcA-(1-&gt;3)-beta-D-Gal-(1-&gt;3)-beta-D-Gal-(1-&gt;4)-beta-D-Xyl)-L-seryl-[protein] + UDP + H(+). Its function is as follows. Glycosyltransferase required for the biosynthesis of the tetrasaccharide (GlcA-Gal-Gal-Xyl-)Ser core linker of heparan sulfate and chondroitin sulfate. May be involved in the biosynthesis of the HNK-1 carbohydrate epitope on glycoproteins. Required for embryonic development. Involved in the elongation of the pharyngeal isthmus during the later stages of embryonic development. Involved in vulval epithelium invagination. The protein is Galactosylgalactosylxylosylprotein 3-beta-glucuronosyltransferase sqv-8 (sqv-8) of Caenorhabditis elegans.